The chain runs to 397 residues: Acetate kinase (397 aa).

N8 serves as a coordination point for Mg(2+). An ATP-binding site is contributed by K15. Residue R89 coordinates substrate. D146 serves as the catalytic Proton donor/acceptor. ATP contacts are provided by residues 206-210 (HLGNG), 281-283 (DLR), and 329-333 (GVGEN). E382 provides a ligand contact to Mg(2+).

Belongs to the acetokinase family. Homodimer. The cofactor is Mg(2+). Requires Mn(2+) as cofactor.

The protein resides in the cytoplasm. The enzyme catalyses acetate + ATP = acetyl phosphate + ADP. It participates in metabolic intermediate biosynthesis; acetyl-CoA biosynthesis; acetyl-CoA from acetate: step 1/2. Its function is as follows. Catalyzes the formation of acetyl phosphate from acetate and ATP. Can also catalyze the reverse reaction. The protein is Acetate kinase of Bacillus anthracis.